Here is a 238-residue protein sequence, read N- to C-terminus: Aspartate/glutamate leucyltransferase (238 aa).

The protein belongs to the R-transferase family. Bpt subfamily.

It localises to the cytoplasm. It catalyses the reaction N-terminal L-glutamyl-[protein] + L-leucyl-tRNA(Leu) = N-terminal L-leucyl-L-glutamyl-[protein] + tRNA(Leu) + H(+). The enzyme catalyses N-terminal L-aspartyl-[protein] + L-leucyl-tRNA(Leu) = N-terminal L-leucyl-L-aspartyl-[protein] + tRNA(Leu) + H(+). Functions in the N-end rule pathway of protein degradation where it conjugates Leu from its aminoacyl-tRNA to the N-termini of proteins containing an N-terminal aspartate or glutamate. In Aeromonas hydrophila subsp. hydrophila (strain ATCC 7966 / DSM 30187 / BCRC 13018 / CCUG 14551 / JCM 1027 / KCTC 2358 / NCIMB 9240 / NCTC 8049), this protein is Aspartate/glutamate leucyltransferase.